The chain runs to 350 residues: Integrin beta-1-binding protein 2 (350 aa).

Zn(2+)-binding residues include Cys-5, Cys-10, Cys-24, and His-27. The 60-residue stretch at 5–64 (CYNKGCGQHFDPNTNLPDSCRYHPGVPIFHDALKGWSCCRKRTVDFSEFLNIKGCTVGLH) folds into the CHORD 1 domain. The short motif at 28–31 (PGVP) is the SH3-binding element. Zn(2+) contacts are provided by Cys-42, Cys-43, Cys-59, and His-64. Positions 70–79 (PEVPPQPEGP) match the SH3-binding motif. The disordered stretch occupies residues 72–92 (VPPQPEGPATSSLQEQKPLNT). A compositionally biased stretch (polar residues) spans 80–92 (ATSSLQEQKPLNT). Residues Cys-150 and Cys-155 each coordinate Zn(2+). In terms of domain architecture, CHORD 2 spans 150–209 (CQNPGCDAVYQGPESDATPCTYHPGAPRFHEGMKSWSCCGIQTLDFGAFLAQPGCRVGRH). The SH2-binding signature appears at 159-162 (YQGP). Cys-169 and His-172 together coordinate Zn(2+). The SH3-binding signature appears at 173-176 (PGAP). Zn(2+)-binding residues include Cys-187, Cys-188, Cys-204, and His-209. In terms of domain architecture, CS spans 216-305 (PASCRHDWHQ…ADPGSWAQLE (90 aa)). The short motif at 235 to 238 (YGQI) is the SH2-binding element. The segment at 317–350 (GVLLEMDEEESEDSDDDLSWTEEEDEEEEEAMGE) is disordered. Residues 321-350 (EMDEEESEDSDDDLSWTEEEDEEEEEAMGE) are compositionally biased toward acidic residues.

Interacts with beta-1 integrin subunit. This interaction is regulated by divalent cations, and it occurs only in absence of calcium. Expressed in skeletal and cardiac muscles but not in other tissues. Is localized in rows flanking the Z line containing alpha-actinin.

Functionally, may play a role during maturation and/or organization of muscles cells. The protein is Integrin beta-1-binding protein 2 (Itgb1bp2) of Mus musculus (Mouse).